Reading from the N-terminus, the 136-residue chain is Glutaredoxin-C7 (136 aa).

A Glutaredoxin domain is found at 29-135; it reads LLRIESLASE…PLLKDAGALW (107 aa). A disulfide bridge connects residues Cys-49 and Cys-52. Residues 133-136 carry the Responsive for interaction with TGA factors motif; it reads ALWL.

It belongs to the glutaredoxin family. CC-type subfamily. Interacts with TGA2, TGA3, TGA7 and PAN. Interacts with TGA9 and TGA10 in the nucleus. Highly expressed in inflorescences, roots, and siliques. Expressed at lower levels in mature flowers.

Its subcellular location is the cytoplasm. It localises to the nucleus. In terms of biological role, has a glutathione-disulfide oxidoreductase activity in the presence of NADPH and glutathione reductase. Reduces low molecular weight disulfides and proteins. Involved in flower development as a regulator of petal primorida initiation and further petal morphogenesis. May mediate post-translational modifications of target proteins required for normal petal organ initiation and morphogenesis. ROXY1/TGA protein interactions can occur in vivo and support their biological relevance in petal development. May be involved in the regulation of the floral regulator class C gene AG (AGAMOUS). This is Glutaredoxin-C7 (GRXC7) from Arabidopsis thaliana (Mouse-ear cress).